Here is a 351-residue protein sequence, read N- to C-terminus: Ferrochelatase (351 aa).

Residues His220 and Glu301 each contribute to the Fe cation site.

Belongs to the ferrochelatase family.

It localises to the cytoplasm. It carries out the reaction heme b + 2 H(+) = protoporphyrin IX + Fe(2+). It participates in porphyrin-containing compound metabolism; protoheme biosynthesis; protoheme from protoporphyrin-IX: step 1/1. In terms of biological role, catalyzes the ferrous insertion into protoporphyrin IX. The sequence is that of Ferrochelatase from Rhodobacter capsulatus (Rhodopseudomonas capsulata).